The sequence spans 62 residues: MSLKITEECTFCAACEPECPVNAISAGSDIYVIDESACTECEGYADSPACVAVCPAECIVKA.

4Fe-4S ferredoxin-type domains follow at residues 2 to 28 (SLKI…SAGS) and 29 to 62 (DIYV…IVKA). Cysteine 9, cysteine 12, cysteine 15, cysteine 19, cysteine 38, cysteine 41, cysteine 50, and cysteine 54 together coordinate [4Fe-4S] cluster.

Requires [4Fe-4S] cluster as cofactor.

Functionally, ferredoxins are iron-sulfur proteins that transfer electrons in a wide variety of metabolic reactions. This Chlorobaculum tepidum (strain ATCC 49652 / DSM 12025 / NBRC 103806 / TLS) (Chlorobium tepidum) protein is Ferredoxin-3.